Reading from the N-terminus, the 942-residue chain is Alanine--tRNA ligase (942 aa).

Zn(2+)-binding residues include His-586, His-590, Cys-695, and His-699.

Belongs to the class-II aminoacyl-tRNA synthetase family. It depends on Zn(2+) as a cofactor.

It localises to the cytoplasm. The catalysed reaction is tRNA(Ala) + L-alanine + ATP = L-alanyl-tRNA(Ala) + AMP + diphosphate. In terms of biological role, catalyzes the attachment of alanine to tRNA(Ala) in a two-step reaction: alanine is first activated by ATP to form Ala-AMP and then transferred to the acceptor end of tRNA(Ala). Also edits incorrectly charged Ser-tRNA(Ala) and Gly-tRNA(Ala) via its editing domain. This chain is Alanine--tRNA ligase, found in Akkermansia muciniphila (strain ATCC BAA-835 / DSM 22959 / JCM 33894 / BCRC 81048 / CCUG 64013 / CIP 107961 / Muc).